A 601-amino-acid chain; its full sequence is NAD-dependent malic enzyme 59 kDa isoform, mitochondrial (601 aa).

A mitochondrion-targeting transit peptide spans Met-1–Leu-18. Tyr-129 functions as the Proton donor in the catalytic mechanism. Arg-182 lines the NAD(+) pocket. Catalysis depends on Lys-200, which acts as the Proton acceptor. A divalent metal cation contacts are provided by Glu-271, Asp-272, and Asp-295. NAD(+)-binding residues include Asp-295 and Asn-444.

Belongs to the malic enzymes family. As to quaternary structure, heterodimer of two related subunits. Requires Mg(2+) as cofactor. It depends on Mn(2+) as a cofactor.

The protein resides in the mitochondrion matrix. It catalyses the reaction (S)-malate + NAD(+) = pyruvate + CO2 + NADH. In Solanum tuberosum (Potato), this protein is NAD-dependent malic enzyme 59 kDa isoform, mitochondrial.